A 521-amino-acid chain; its full sequence is GMP synthase [glutamine-hydrolyzing] (521 aa).

One can recognise a Glutamine amidotransferase type-1 domain in the interval 5–197 (KILILDFGSQ…VLDICGAQPG (193 aa)). The active-site Nucleophile is C81. Active-site residues include H171 and E173. The 193-residue stretch at 198 to 390 (WTMPNYIEEA…LGLPREMVYR (193 aa)) folds into the GMPS ATP-PPase domain. 225–231 (SGGVDSS) is a binding site for ATP.

As to quaternary structure, homodimer.

The enzyme catalyses XMP + L-glutamine + ATP + H2O = GMP + L-glutamate + AMP + diphosphate + 2 H(+). It participates in purine metabolism; GMP biosynthesis; GMP from XMP (L-Gln route): step 1/1. Functionally, catalyzes the synthesis of GMP from XMP. The sequence is that of GMP synthase [glutamine-hydrolyzing] (guaA) from Neisseria meningitidis serogroup B (strain ATCC BAA-335 / MC58).